The primary structure comprises 181 residues: Adenine phosphoribosyltransferase (181 aa).

Belongs to the purine/pyrimidine phosphoribosyltransferase family. In terms of assembly, homodimer.

It is found in the cytoplasm. The enzyme catalyses AMP + diphosphate = 5-phospho-alpha-D-ribose 1-diphosphate + adenine. It participates in purine metabolism; AMP biosynthesis via salvage pathway; AMP from adenine: step 1/1. In terms of biological role, catalyzes a salvage reaction resulting in the formation of AMP, that is energically less costly than de novo synthesis. In Rhodopseudomonas palustris (strain ATCC BAA-98 / CGA009), this protein is Adenine phosphoribosyltransferase.